Reading from the N-terminus, the 408-residue chain is Histidine--tRNA ligase (408 aa).

This sequence belongs to the class-II aminoacyl-tRNA synthetase family. As to quaternary structure, homodimer.

The protein resides in the cytoplasm. It carries out the reaction tRNA(His) + L-histidine + ATP = L-histidyl-tRNA(His) + AMP + diphosphate + H(+). The polypeptide is Histidine--tRNA ligase (Campylobacter jejuni subsp. jejuni serotype O:2 (strain ATCC 700819 / NCTC 11168)).